Here is a 532-residue protein sequence, read N- to C-terminus: CTP synthase (532 aa).

An amidoligase domain region spans residues 1–268; sequence MTTKYIFVTG…DEIVCDHLNL (268 aa). Position 14 (S14) interacts with CTP. S14 serves as a coordination point for UTP. 15–20 serves as a coordination point for ATP; it reads SLGKGI. Y55 is an L-glutamine binding site. D72 provides a ligand contact to ATP. Mg(2+) is bound by residues D72 and E142. CTP-binding positions include 149-151, 189-194, and K225; these read DIE and KSKPTQ. Residues 189–194 and K225 each bind UTP; that span reads KSKPTQ. 241–243 provides a ligand contact to ATP; it reads RDA. The 240-residue stretch at 293–532 folds into the Glutamine amidotransferase type-1 domain; the sequence is KIALVGKYVA…REFIQASLRK (240 aa). Residue G355 participates in L-glutamine binding. The active-site Nucleophile; for glutamine hydrolysis is C382. Residues 383-386, E406, and R463 each bind L-glutamine; that span reads LGMQ. Active-site residues include H508 and E510.

Belongs to the CTP synthase family. In terms of assembly, homotetramer.

The catalysed reaction is UTP + L-glutamine + ATP + H2O = CTP + L-glutamate + ADP + phosphate + 2 H(+). It carries out the reaction L-glutamine + H2O = L-glutamate + NH4(+). It catalyses the reaction UTP + NH4(+) + ATP = CTP + ADP + phosphate + 2 H(+). The protein operates within pyrimidine metabolism; CTP biosynthesis via de novo pathway; CTP from UDP: step 2/2. Allosterically activated by GTP, when glutamine is the substrate; GTP has no effect on the reaction when ammonia is the substrate. The allosteric effector GTP functions by stabilizing the protein conformation that binds the tetrahedral intermediate(s) formed during glutamine hydrolysis. Inhibited by the product CTP, via allosteric rather than competitive inhibition. In terms of biological role, catalyzes the ATP-dependent amination of UTP to CTP with either L-glutamine or ammonia as the source of nitrogen. Regulates intracellular CTP levels through interactions with the four ribonucleotide triphosphates. The polypeptide is CTP synthase (Halalkalibacterium halodurans (strain ATCC BAA-125 / DSM 18197 / FERM 7344 / JCM 9153 / C-125) (Bacillus halodurans)).